We begin with the raw amino-acid sequence, 440 residues long: Enolase 1 (440 aa).

Residues H161 and E170 each contribute to the substrate site. E213 serves as the catalytic Proton donor. Mg(2+) is bound by residues D248, E297, and D324. Residues E297 and D324 each contribute to the substrate site. The Proton acceptor role is filled by K349. Residues 376-379 and K400 contribute to the substrate site; that span reads SHRS.

Belongs to the enolase family. In terms of assembly, homodimer. It depends on Mg(2+) as a cofactor.

It is found in the cytoplasm. It carries out the reaction (2R)-2-phosphoglycerate = phosphoenolpyruvate + H2O. It participates in carbohydrate degradation; glycolysis; pyruvate from D-glyceraldehyde 3-phosphate: step 4/5. The sequence is that of Enolase 1 (ENO1) from Candida albicans (strain SC5314 / ATCC MYA-2876) (Yeast).